A 474-amino-acid chain; its full sequence is tRNA-2-methylthio-N(6)-dimethylallyladenosine synthase (474 aa).

The 118-residue stretch at 3–120 (KKLHIKTWGC…LPEMINSVRG (118 aa)) folds into the MTTase N-terminal domain. The [4Fe-4S] cluster site is built by C12, C49, C83, C157, C161, and C164. In terms of domain architecture, Radical SAM core spans 143–375 (RAEGPTAFVS…QERINQQAMA (233 aa)). Positions 378-441 (RRMLGSTQRI…PNSLRGKVVR (64 aa)) constitute a TRAM domain.

The protein belongs to the methylthiotransferase family. MiaB subfamily. Monomer. Requires [4Fe-4S] cluster as cofactor.

The protein localises to the cytoplasm. It carries out the reaction N(6)-dimethylallyladenosine(37) in tRNA + (sulfur carrier)-SH + AH2 + 2 S-adenosyl-L-methionine = 2-methylsulfanyl-N(6)-dimethylallyladenosine(37) in tRNA + (sulfur carrier)-H + 5'-deoxyadenosine + L-methionine + A + S-adenosyl-L-homocysteine + 2 H(+). Catalyzes the methylthiolation of N6-(dimethylallyl)adenosine (i(6)A), leading to the formation of 2-methylthio-N6-(dimethylallyl)adenosine (ms(2)i(6)A) at position 37 in tRNAs that read codons beginning with uridine. This chain is tRNA-2-methylthio-N(6)-dimethylallyladenosine synthase, found in Salmonella arizonae (strain ATCC BAA-731 / CDC346-86 / RSK2980).